Reading from the N-terminus, the 220-residue chain is Large ribosomal subunit protein bL9 (220 aa).

A compositionally biased stretch (low complexity) spans 167 to 184 (AAAEVEQAEDVAAAEQQD). The segment at 167–220 (AAAEVEQAEDVAAAEQQDSSPVDDHADDADGVADGEGRDEGAGDASDEEEMPST) is disordered. The segment covering 211–220 (ASDEEEMPST) has biased composition (acidic residues).

Belongs to the bacterial ribosomal protein bL9 family.

Functionally, binds to the 23S rRNA. In Anaplasma marginale (strain Florida), this protein is Large ribosomal subunit protein bL9.